Consider the following 1755-residue polypeptide: Transposon Ty1-MR1 Gag-Pol polyprotein (1755 aa).

Composition is skewed to polar residues over residues 1–31 (MESQ…TTQD), 46–60 (VSTQ…TPLS), and 137–168 (VGTH…TNQH). 3 disordered regions span residues 1 to 88 (MESQ…YPQQ), 137 to 174 (VGTH…PPPI), and 350 to 420 (QQES…IRGS). Residues 299–401 (NNGIPINNKV…NSQSRTARAH (103 aa)) are RNA-binding. Over residues 363–372 (SPSDEKKDSR) the composition is skewed to basic and acidic residues. Residues 373–411 (TYTNTTKPKSITRNSQKPNNSQSRTARAHNVSTFNNSPG) show a composition bias toward polar residues. Residue aspartate 461 is the For protease activity; shared with dimeric partner of the active site. The interval 583 to 640 (NVHTSESTRKYPYPFIHRMLAHANAQTIRYSLKNNTITYFNESDVDWSSAIDYQCPDC) is integrase-type zinc finger-like. An Integrase catalytic domain is found at 660 to 835 (NSYEPFQYLH…AGLDISTLLP (176 aa)). Mg(2+) contacts are provided by aspartate 671 and aspartate 736. Residues 958-1172 (AVSPTDSTPP…LGGIGDSNAY (215 aa)) form a disordered region. Residues 960 to 969 (SPTDSTPPST) are compositionally biased toward low complexity. Residues 1005 to 1015 (STPQISDIEST) are compositionally biased toward polar residues. Residues 1038–1053 (ESSHASKSKDFRHSDS) are compositionally biased toward basic and acidic residues. Composition is skewed to polar residues over residues 1054-1082 (YSDN…QTSE) and 1095-1106 (SIDTSSSESNSL). A Bipartite nuclear localization signal motif is present at residues 1178 to 1212 (KKRSLEDNETEIKVSRDTWNTKNMRSLEPPRSKKR). The region spanning 1338-1476 (NNYYITQLDI…DILGLEIKYQ (139 aa)) is the Reverse transcriptase Ty1/copia-type domain. Residues aspartate 1346, aspartate 1427, aspartate 1428, aspartate 1610, glutamate 1652, and aspartate 1685 each contribute to the Mg(2+) site. In terms of domain architecture, RNase H Ty1/copia-type spans 1610–1752 (DASYGNQPYY…IKTFKLLTNK (143 aa)).

In terms of assembly, the capsid protein forms a homotrimer, from which the VLPs are assembled. The protease is a homodimer, whose active site consists of two apposed aspartic acid residues. Post-translationally, initially, virus-like particles (VLPs) are composed of the structural unprocessed proteins Gag and Gag-Pol, and also contain the host initiator methionine tRNA (tRNA(i)-Met) which serves as a primer for minus-strand DNA synthesis, and a dimer of genomic Ty RNA. Processing of the polyproteins occurs within the particle and proceeds by an ordered pathway, called maturation. First, the protease (PR) is released by autocatalytic cleavage of the Gag-Pol polyprotein yielding capsid protein p45 and a Pol-p154 precursor protein. This cleavage is a prerequisite for subsequent processing of Pol-p154 at the remaining sites to release the mature structural and catalytic proteins. Maturation takes place prior to the RT reaction and is required to produce transposition-competent VLPs.

The protein resides in the cytoplasm. It is found in the nucleus. It catalyses the reaction DNA(n) + a 2'-deoxyribonucleoside 5'-triphosphate = DNA(n+1) + diphosphate. The enzyme catalyses Endonucleolytic cleavage to 5'-phosphomonoester.. Functionally, capsid protein (CA) is the structural component of the virus-like particle (VLP), forming the shell that encapsulates the retrotransposons dimeric RNA genome. The particles are assembled from trimer-clustered units and there are holes in the capsid shells that allow for the diffusion of macromolecules. CA also has nucleocapsid-like chaperone activity, promoting primer tRNA(i)-Met annealing to the multipartite primer-binding site (PBS), dimerization of Ty1 RNA and initiation of reverse transcription. Its function is as follows. The aspartyl protease (PR) mediates the proteolytic cleavages of the Gag and Gag-Pol polyproteins after assembly of the VLP. Reverse transcriptase/ribonuclease H (RT) is a multifunctional enzyme that catalyzes the conversion of the retro-elements RNA genome into dsDNA within the VLP. The enzyme displays a DNA polymerase activity that can copy either DNA or RNA templates, and a ribonuclease H (RNase H) activity that cleaves the RNA strand of RNA-DNA heteroduplexes during plus-strand synthesis and hydrolyzes RNA primers. The conversion leads to a linear dsDNA copy of the retrotransposon that includes long terminal repeats (LTRs) at both ends. In terms of biological role, integrase (IN) targets the VLP to the nucleus, where a subparticle preintegration complex (PIC) containing at least integrase and the newly synthesized dsDNA copy of the retrotransposon must transit the nuclear membrane. Once in the nucleus, integrase performs the integration of the dsDNA into the host genome. The polypeptide is Transposon Ty1-MR1 Gag-Pol polyprotein (TY1B-MR1) (Saccharomyces cerevisiae (strain ATCC 204508 / S288c) (Baker's yeast)).